The following is a 162-amino-acid chain: Protein-export protein SecB (162 aa).

It belongs to the SecB family. Homotetramer, a dimer of dimers. One homotetramer interacts with 1 SecA dimer.

The protein resides in the cytoplasm. In terms of biological role, one of the proteins required for the normal export of preproteins out of the cell cytoplasm. It is a molecular chaperone that binds to a subset of precursor proteins, maintaining them in a translocation-competent state. It also specifically binds to its receptor SecA. The protein is Protein-export protein SecB of Legionella pneumophila subsp. pneumophila (strain Philadelphia 1 / ATCC 33152 / DSM 7513).